We begin with the raw amino-acid sequence, 505 residues long: Maturase K (505 aa).

Belongs to the intron maturase 2 family. MatK subfamily.

It localises to the plastid. It is found in the chloroplast. In terms of biological role, usually encoded in the trnK tRNA gene intron. Probably assists in splicing its own and other chloroplast group II introns. This is Maturase K from Allamanda cathartica (Yellow allamanda).